Reading from the N-terminus, the 132-residue chain is ER membrane protein complex subunit 5 (132 aa).

At 1 to 3 (MAS) the chain is on the cytoplasmic side. Residues 4-22 (SIWKGLVGIGLFALAHAAF) form a helical membrane-spanning segment. Topologically, residues 23–43 (SAAQHRSYMRLTEKEDETLPI) are lumenal. A helical membrane pass occupies residues 44–63 (DIVLQTLLAFIVACYGIVHI). The Cytoplasmic segment spans residues 64–132 (AGEFKDMDAT…KLSKLESMHR (69 aa)).

Belongs to the membrane magnesium transporter (TC 1.A.67) family. As to quaternary structure, component of the ER membrane protein complex (EMC).

It is found in the endoplasmic reticulum membrane. The protein resides in the golgi apparatus membrane. Its subcellular location is the early endosome membrane. Its function is as follows. Part of the endoplasmic reticulum membrane protein complex (EMC) that enables the energy-independent insertion into endoplasmic reticulum membranes of newly synthesized membrane proteins. Preferentially accommodates proteins with transmembrane domains that are weakly hydrophobic or contain destabilizing features such as charged and aromatic residues. Involved in the cotranslational insertion of multi-pass membrane proteins in which stop-transfer membrane-anchor sequences become ER membrane spanning helices. It is also required for the post-translational insertion of tail-anchored/TA proteins in endoplasmic reticulum membranes. By mediating the proper cotranslational insertion of N-terminal transmembrane domains in an N-exo topology, with translocated N-terminus in the lumen of the ER, controls the topology of multi-pass membrane proteins like the G protein-coupled receptors. By regulating the insertion of various proteins in membranes, it is indirectly involved in many cellular processes. May be involved in Mg(2+) transport. The chain is ER membrane protein complex subunit 5 from Xenopus tropicalis (Western clawed frog).